We begin with the raw amino-acid sequence, 262 residues long: Beta-phosphoglucomutase (262 aa).

Asp29 serves as the catalytic Nucleophile. Residues Asp29 and Asp31 each contribute to the Mg(2+) site. A 4-aspartylphosphate modification is found at Asp29. Asp31 (proton donor/acceptor) is an active-site residue. Positions 31, 79, 82, 157, and 159 each coordinate beta-D-glucose 6-phosphate. Position 215 (Asp215) interacts with Mg(2+).

The protein belongs to the HAD-like hydrolase superfamily. CbbY/CbbZ/Gph/YieH family. As to quaternary structure, monomer. Requires Mg(2+) as cofactor. Post-translationally, autophosphorylated.

It carries out the reaction beta-D-glucose 1-phosphate = beta-D-glucose 6-phosphate. Its function is as follows. Catalyzes the interconversion of D-glucose 1-phosphate (G1P) and D-glucose 6-phosphate (G6P), forming beta-D-glucose 1,6-(bis)phosphate (beta-G16P) as an intermediate. This Mycobacterium bovis (strain ATCC BAA-935 / AF2122/97) protein is Beta-phosphoglucomutase.